The chain runs to 294 residues: Taste receptor type 2 member 143 (294 aa).

The Extracellular portion of the chain corresponds to 1 to 7 (MPSTPTL). The helical transmembrane segment at 8–28 (IFIVIFFLVSVASMLQNGFMI) threads the bilayer. Over 29–43 (IVLGREWMRNRALPA) the chain is Cytoplasmic. A helical membrane pass occupies residues 44-64 (VDMIVASLASSRFCLHGIAIL). The Extracellular portion of the chain corresponds to 65 to 80 (NNFLASFDFCYQANFV). Residues 81 to 101 (GILWDFINTLILWLTAWLAIF) form a helical membrane-spanning segment. The Cytoplasmic segment spans residues 102 to 128 (YCVKISSFSHPVLFWLKWRISQLVPRL). A helical membrane pass occupies residues 129 to 149 (LLVSLIMGGLSAIISATGNII). The Extracellular segment spans residues 150-180 (ANQMIISQGFHGNCTFGHMSLDFYRYYYLSH). An N-linked (GlcNAc...) asparagine glycan is attached at Asn-162. A helical membrane pass occupies residues 181–201 (AVLMWFTPFFLFLVSIIFLMF). Over 202–227 (SLYRHVEKMRGHRPGPWDPRTQAHTM) the chain is Cytoplasmic. The helical transmembrane segment at 228-248 (ALKSLTVFITFYILFFLALII) threads the bilayer. At 249 to 260 (SSTKSKTMHSYW) the chain is on the extracellular side. The chain crosses the membrane as a helical span at residues 261 to 281 (YWVREIIIYTGIFLNSIILVL). Topologically, residues 282–294 (SNPKLRKALKMRF) are cytoplasmic.

This sequence belongs to the G-protein coupled receptor T2R family.

It is found in the membrane. Putative taste receptor which may play a role in the perception of bitterness. The chain is Taste receptor type 2 member 143 from Rattus norvegicus (Rat).